Reading from the N-terminus, the 1165-residue chain is Tectonin beta-propeller repeat-containing protein 1 (1165 aa).

TECPR repeat units lie at residues 209 to 240 (LSVW…SLLD), 254 to 285 (DLLW…SIVE), 301 to 332 (SVVW…IEMV), and 344 to 376 (DQVW…KAIV). Residues 404-486 (RGSGESAPSD…GPATTPAELP (83 aa)) are disordered. The region spanning 611-717 (KTGALQWWCD…WLALLSLSCC (107 aa)) is the PH domain. The TECPR 5 repeat unit spans residues 729-756 (QAIWSITCKGDIFVSEPSPDLEAHEHPL). 2 positions are modified to phosphoserine: Ser938 and Ser949. 4 TECPR repeats span residues 953-984 (IALW…LHVG), 998-1029 (YQVW…YHIP), 1044-1075 (TSVY…EHVS), and 1087-1127 (DQVW…DYGI). A disordered region spans residues 1140-1165 (ATRAPRSSSQEQEPSAPPEAHDPVCC). Low complexity predominate over residues 1143-1153 (APRSSSQEQEP).

This sequence belongs to the TECPR1 family. In terms of assembly, interacts with ATG5; the interaction is direct. Interacts with WIPI2. Interacts with the ATG5-ATG12 conjugate, the interaction is however mutually exclusive with ATG16, since it does not interact with ATG12-ATG5-ATG16 complex.

Its subcellular location is the cytoplasmic vesicle. It localises to the autophagosome membrane. It is found in the lysosome membrane. Tethering factor involved in autophagy. Involved in autophagosome maturation by promoting the autophagosome fusion with lysosomes: acts by associating with both the ATG5-ATG12 conjugate and phosphatidylinositol-3-phosphate (PtdIns(3)P) present at the surface of autophagosomes. Also involved in selective autophagy against bacterial pathogens, by being required for phagophore/preautophagosomal structure biogenesis and maturation. This is Tectonin beta-propeller repeat-containing protein 1 (TECPR1) from Pongo abelii (Sumatran orangutan).